Here is a 238-residue protein sequence, read N- to C-terminus: Androgen-induced gene 1 protein (238 aa).

Over 1–12 (MALVPCQVLRMA) the chain is Cytoplasmic. A helical transmembrane segment spans residues 13 to 30 (ILLSYCSILCNYKAIEMP). Topologically, residues 31–44 (SHQTYGGSWKFLTF) are extracellular. Residues 45–67 (IDLVIQAVFFGICVLTDLSSLLT) traverse the membrane as a helical segment. Residues 68-87 (RGSGNQEQERQLKKLISLRD) are Cytoplasmic-facing. A helical transmembrane segment spans residues 88–110 (WMLAVLAFPVGVFVVAVFWIIYA). Over 111–124 (YDREMIYPKLLDNF) the chain is Extracellular. The helical transmembrane segment at 125–144 (IPGWLNHGMHTTVLPFILIE) threads the bilayer. Residues 145-156 (MRTSHHQYPSRS) are Cytoplasmic-facing. Residues 157–179 (SGLTAICTFSVGYILWVCWVHHV) traverse the membrane as a helical segment. At 180–193 (TGMWVYPFLEHIGP) the chain is on the extracellular side. A helical membrane pass occupies residues 194-216 (GARIIFFGSTTILMNFLYLLGEV). Topologically, residues 217–238 (LNNYIWDTQKSMEEEKEKPKLE) are cytoplasmic.

The protein belongs to the AIG1 family. Highly expressed in heart, ovary, testis, liver, and kidney, at lower levels in spleen, prostate, brain, skeletal muscle, pancreas, small intestine and colon, and undetected in peripheral blood leukocytes, thymus, lung and placenta. AIG1 expression is higher in hair follicles from males than from females.

It is found in the cell membrane. The catalysed reaction is 9-hexadecanoyloxy-octadecanoate + H2O = 9-hydroxy-octadecanoate + hexadecanoate + H(+). It catalyses the reaction 12-hexadecanoyloxy-octadecanoate + H2O = 12-hydroxyoctadecanoate + hexadecanoate + H(+). The enzyme catalyses 9-(9Z-hexadecenoyloxy)-octadecanoate + H2O = (9Z)-hexadecenoate + 9-hydroxy-octadecanoate + H(+). It carries out the reaction 12-(9Z-hexadecenoyloxy)-octadecanoate + H2O = 12-hydroxyoctadecanoate + (9Z)-hexadecenoate + H(+). The catalysed reaction is 13-(9Z-hexadecenoyloxy)-octadecanoate + H2O = 13-hydroxy-octadecanoate + (9Z)-hexadecenoate + H(+). It catalyses the reaction 9-octadecanoyloxy-octadecanoate + H2O = 9-hydroxy-octadecanoate + octadecanoate + H(+). The enzyme catalyses 12-octadecanoyloxy-octadecanoate + H2O = 12-hydroxyoctadecanoate + octadecanoate + H(+). It carries out the reaction 13-octadecanoyloxy-octadecanoate + H2O = 13-hydroxy-octadecanoate + octadecanoate + H(+). The catalysed reaction is 9-(9Z-octadecenoyloxy)-octadecanoate + H2O = 9-hydroxy-octadecanoate + (9Z)-octadecenoate + H(+). It catalyses the reaction 12-(9Z-octadecenoyloxy)-octadecanoate + H2O = 12-hydroxyoctadecanoate + (9Z)-octadecenoate + H(+). The enzyme catalyses 13-(9Z-octadecenoyloxy)-octadecanoate + H2O = 13-hydroxy-octadecanoate + (9Z)-octadecenoate + H(+). It carries out the reaction 5-(9Z-hexadecenoyloxy)-octadecanoate + H2O = 5-hydroxy-octadecanoate + (9Z)-hexadecenoate + H(+). Inhibited by N-hydroxyhydantoin carbamate JJH260 and beta-lactone KC01. In terms of biological role, hydrolyzes bioactive fatty-acid esters of hydroxy-fatty acids (FAHFAs), but not other major classes of lipids. Show a preference for FAHFAs with branching distal from the carboxylate head group of the lipids. The chain is Androgen-induced gene 1 protein (AIG1) from Homo sapiens (Human).